Consider the following 407-residue polypeptide: uncharacterized protein (407 aa).

Residue K22 forms a Glycyl lysine isopeptide (Lys-Gly) (interchain with G-Cter in ubiquitin) linkage.

It belongs to the SVF1 family.

It is found in the cytoplasm. This is an uncharacterized protein from Saccharomyces cerevisiae (strain ATCC 204508 / S288c) (Baker's yeast).